A 182-amino-acid chain; its full sequence is Transcription termination/antitermination protein NusG (182 aa).

The 31-residue stretch at 131 to 161 (GEVVRVNEGPFADFNGTVEEVDYEKSRLKVS) folds into the KOW domain.

This sequence belongs to the NusG family.

Participates in transcription elongation, termination and antitermination. This Vibrio parahaemolyticus serotype O3:K6 (strain RIMD 2210633) protein is Transcription termination/antitermination protein NusG.